The sequence spans 139 residues: D-ribose pyranase (139 aa).

The active-site Proton donor is H20. Residues D28, H106, and 128–130 (YAN) contribute to the substrate site.

Belongs to the RbsD / FucU family. RbsD subfamily. Homodecamer.

The protein resides in the cytoplasm. The enzyme catalyses beta-D-ribopyranose = beta-D-ribofuranose. The protein operates within carbohydrate metabolism; D-ribose degradation; D-ribose 5-phosphate from beta-D-ribopyranose: step 1/2. Catalyzes the interconversion of beta-pyran and beta-furan forms of D-ribose. The protein is D-ribose pyranase of Salmonella agona (strain SL483).